Here is a 682-residue protein sequence, read N- to C-terminus: Putative L-type lectin-domain containing receptor kinase I.1 (682 aa).

A signal peptide spans 1–19 (MAQRLHLLLLLFLICFVNL). Over 20-292 (ISFSSQQDLS…RPKKPEKTSP (273 aa)) the chain is Extracellular. The legume-lectin like stretch occupies residues 27-264 (DLSFIYNGFN…YQYILGWSFS (238 aa)). 5 N-linked (GlcNAc...) asparagine glycosylation sites follow: Asn60, Asn130, Asn187, Asn210, and Asn231. Residues 293–313 (LLIVLLIILAIIVMVVVGGFY) traverse the membrane as a helical segment. Topologically, residues 314–682 (LYRRKKYAEV…SHTIIYGDGR (369 aa)) are cytoplasmic. In terms of domain architecture, Protein kinase spans 348–622 (FNKDGRLGRG…VQYINRHQRL (275 aa)). ATP-binding positions include 354–362 (LGRGGFGEV) and Lys376. The active-site Proton acceptor is Asp472.

It in the C-terminal section; belongs to the protein kinase superfamily. Ser/Thr protein kinase family. In the N-terminal section; belongs to the leguminous lectin family.

It localises to the cell membrane. It catalyses the reaction L-seryl-[protein] + ATP = O-phospho-L-seryl-[protein] + ADP + H(+). The catalysed reaction is L-threonyl-[protein] + ATP = O-phospho-L-threonyl-[protein] + ADP + H(+). Its function is as follows. Involved in resistance response to the pathogenic fungus Alternaria brassicicola. In Arabidopsis thaliana (Mouse-ear cress), this protein is Putative L-type lectin-domain containing receptor kinase I.1.